A 62-amino-acid polypeptide reads, in one-letter code: Large ribosomal subunit protein uL30 (62 aa).

Belongs to the universal ribosomal protein uL30 family. In terms of assembly, part of the 50S ribosomal subunit.

The polypeptide is Large ribosomal subunit protein uL30 (Dinoroseobacter shibae (strain DSM 16493 / NCIMB 14021 / DFL 12)).